We begin with the raw amino-acid sequence, 190 residues long: Glucose-6-phosphate isomerase (190 aa).

Fe cation contacts are provided by His-89, His-91, Glu-98, and His-137.

The protein belongs to the archaeal-type GPI family. Homodimer. Requires Fe cation as cofactor.

The protein resides in the cytoplasm. It catalyses the reaction alpha-D-glucose 6-phosphate = beta-D-fructose 6-phosphate. The protein operates within carbohydrate degradation; glycolysis; D-glyceraldehyde 3-phosphate and glycerone phosphate from D-glucose: step 2/4. Inhibited by mannose 6-phosphate, fructose 1-phosphate and fructose 1,6-bisphosphate. Its activity is also inhibited by Cobalt (II) ions &lt; EDTA &lt; nickel (II) ions &lt; zinc (II) ions &lt;&lt; cadmium (II) ions &lt; copper (II) ions. Sodium and potassium ions and manganese ions show little or no effect on activity. The sequence is that of Glucose-6-phosphate isomerase (pgiA) from Thermococcus litoralis.